Here is a 255-residue protein sequence, read N- to C-terminus: Type III pantothenate kinase (255 aa).

An ATP-binding site is contributed by 6–13; that stretch reads DIGNTNIV. 107–110 is a substrate binding site; that stretch reads GSDC. The active-site Proton acceptor is Asp109. Residue Asp129 participates in K(+) binding. Residue Thr132 participates in ATP binding. Residue Thr184 coordinates substrate.

It belongs to the type III pantothenate kinase family. As to quaternary structure, homodimer. NH4(+) is required as a cofactor. The cofactor is K(+).

Its subcellular location is the cytoplasm. The enzyme catalyses (R)-pantothenate + ATP = (R)-4'-phosphopantothenate + ADP + H(+). Its pathway is cofactor biosynthesis; coenzyme A biosynthesis; CoA from (R)-pantothenate: step 1/5. Catalyzes the phosphorylation of pantothenate (Pan), the first step in CoA biosynthesis. This chain is Type III pantothenate kinase, found in Bifidobacterium longum subsp. infantis (strain ATCC 15697 / DSM 20088 / JCM 1222 / NCTC 11817 / S12).